We begin with the raw amino-acid sequence, 407 residues long: Endo-1,4-beta-xylanase D (407 aa).

The first 19 residues, 1–19 (MTLVKSILLALAAGHVAQA), serve as a signal peptide directing secretion. A GH10 domain is found at 20–333 (QLNTAAKAAG…KPAYYGILAG (314 aa)). Residue N118 is glycosylated (N-linked (GlcNAc...) asparagine). E148 functions as the Proton donor in the catalytic mechanism. Catalysis depends on E255, which acts as the Nucleophile. C283 and C289 are oxidised to a cystine. Residues 337–364 (GSGSSSSTSSTTLITTTTPTASSSTTSA) are disordered. A CBM1 domain is found at 371–407 (SGAAHWGQCGGIGWSGPTICVSPYTCQVLNPYYSQCL).

It belongs to the glycosyl hydrolase 10 (cellulase F) family.

Its subcellular location is the secreted. It catalyses the reaction Endohydrolysis of (1-&gt;4)-beta-D-xylosidic linkages in xylans.. It functions in the pathway glycan degradation; xylan degradation. With respect to regulation, inhibited by wheat xylanase inhibiting protein I (XIP-I). Functionally, endo-1,4-beta-xylanase involved in the hydrolysis of xylan, a major structural heterogeneous polysaccharide found in plant biomass representing the second most abundant polysaccharide in the biosphere, after cellulose. Shows an endo-mode of action on xylan forming mainly xylobiose and short-chain xylooligosaccharides (XOS). This Talaromyces funiculosus (Fruitlet core rot fungus) protein is Endo-1,4-beta-xylanase D (xynD).